The primary structure comprises 303 residues: MCHGRIAPKSTSVFAVASVGHGVFLPLVILCTLLGDGLASVCPLPPEPENGGYICHPRPCRDPLTAGSVIEYLCAEGYMLKGDYKYLTCKNGEWKPAMEISCRLNEDKDTHTSLGVPTLSIVASTASSVALILLLVVLFVLLQPKLKSFHHSRRDQGVSGDQVSIMVDGVQVALPSYEEAVYGSSGHCVPPADPRVQIVLSEGSGPSGRSVPREQQLPDQGACSSAGGEDEAPGQSGLCEAWGSRASETVMVHQATTSSWVAGSGNRQLAHKETADSENSDIQSLLSLTSEEYTDDIPLLKEA.

An N-terminal signal peptide occupies residues methionine 1 to alanine 39. The 65-residue stretch at serine 40–leucine 104 folds into the Sushi domain. The Extracellular portion of the chain corresponds to serine 40–serine 120. 2 disulfide bridges follow: cysteine 42-cysteine 89 and cysteine 74-cysteine 102. Residues isoleucine 121–leucine 141 traverse the membrane as a helical segment. The Cytoplasmic segment spans residues leucine 142 to alanine 303. Disordered stretches follow at residues valine 199 to glycine 237 and glycine 263 to isoleucine 282.

Its subcellular location is the membrane. In terms of biological role, may play a role in growth-suppressive activity and cell death. May be involved in the production of chemokine molecules in umbilical vein endothelial cells (HUVECs) cultured in THP1 monocyte LPS-induced medium. Plays a role in preventing tumor onset. This chain is Sushi domain-containing protein 6, found in Homo sapiens (Human).